We begin with the raw amino-acid sequence, 122 residues long: Large ribosomal subunit protein uL14c (122 aa).

Belongs to the universal ribosomal protein uL14 family. Part of the 50S ribosomal subunit.

It is found in the plastid. It localises to the chloroplast. Its function is as follows. Binds to 23S rRNA. This chain is Large ribosomal subunit protein uL14c, found in Buxus microphylla (Littleleaf boxwood).